Here is a 110-residue protein sequence, read N- to C-terminus: MKILALAVAFQGLALVCCTDTTDNYNNFTHNTSTFYRIADYDKRFWSVKLPPVNWTTCGNEDHPWITIHYDEIDKLVDDKLASWDKGPVPDREEFRNSILRQARCDRPHY.

This is an uncharacterized protein from Saccharomyces cerevisiae (strain ATCC 204508 / S288c) (Baker's yeast).